A 353-amino-acid polypeptide reads, in one-letter code: MTAILERRESTSLWGRFCNWITSTENRLYIGWFGVLMIPTLLTATSVFIIAFIAAPPVDIDGIREPVSGSLLYGNNIISGAIIPTSAAIGLHFYPIWEAASVDEWLYNGGPYELIVLHFLLGVACYMGREWELSFRLGMRPWIAVAYSAPVAAATAVFLIYPIGQGSFSDGMPLGISGTFNFMIVFQAEHNILMHPFHMLGVAGVFGGSLFSAMHGSLVTSSLIRETTENESANEGYRFGQEEETYNIVAAHGYFGRLIFQYASFNNSRSLHFFLAAWPVVGIWFTALGISTMAFNLNGFNFNQSVVDSQGRVINTWADIINRANLGMEVMHERNAHNFPLDLASVEAPSTNG.

Thr2 is modified (N-acetylthreonine). Thr2 bears the Phosphothreonine mark. Transmembrane regions (helical) follow at residues 29–46 (YIGW…TATS), 118–133 (HFLL…EWEL), and 142–156 (WIAV…AATA). Position 118 (His118) interacts with chlorophyll a. Tyr126 lines the pheophytin a pocket. [CaMn4O5] cluster-binding residues include Asp170 and Glu189. The helical transmembrane segment at 197–218 (FHMLGVAGVFGGSLFSAMHGSL) threads the bilayer. Residue His198 coordinates chlorophyll a. A quinone is bound by residues His215 and 264–265 (SF). Fe cation is bound at residue His215. Residue His272 participates in Fe cation binding. A helical transmembrane segment spans residues 274–288 (FLAAWPVVGIWFTAL). Residues His332, Glu333, Asp342, and Ala344 each contribute to the [CaMn4O5] cluster site. Positions 345–353 (SVEAPSTNG) are excised as a propeptide.

Belongs to the reaction center PufL/M/PsbA/D family. PSII is composed of 1 copy each of membrane proteins PsbA, PsbB, PsbC, PsbD, PsbE, PsbF, PsbH, PsbI, PsbJ, PsbK, PsbL, PsbM, PsbT, PsbX, PsbY, PsbZ, Psb30/Ycf12, at least 3 peripheral proteins of the oxygen-evolving complex and a large number of cofactors. It forms dimeric complexes. The D1/D2 heterodimer binds P680, chlorophylls that are the primary electron donor of PSII, and subsequent electron acceptors. It shares a non-heme iron and each subunit binds pheophytin, quinone, additional chlorophylls, carotenoids and lipids. D1 provides most of the ligands for the Mn4-Ca-O5 cluster of the oxygen-evolving complex (OEC). There is also a Cl(-1) ion associated with D1 and D2, which is required for oxygen evolution. The PSII complex binds additional chlorophylls, carotenoids and specific lipids. serves as cofactor. Post-translationally, tyr-161 forms a radical intermediate that is referred to as redox-active TyrZ, YZ or Y-Z. In terms of processing, C-terminally processed by CTPA; processing is essential to allow assembly of the oxygen-evolving complex and thus photosynthetic growth.

It localises to the plastid. It is found in the chloroplast thylakoid membrane. The catalysed reaction is 2 a plastoquinone + 4 hnu + 2 H2O = 2 a plastoquinol + O2. Photosystem II (PSII) is a light-driven water:plastoquinone oxidoreductase that uses light energy to abstract electrons from H(2)O, generating O(2) and a proton gradient subsequently used for ATP formation. It consists of a core antenna complex that captures photons, and an electron transfer chain that converts photonic excitation into a charge separation. The D1/D2 (PsbA/PsbD) reaction center heterodimer binds P680, the primary electron donor of PSII as well as several subsequent electron acceptors. This Acorus calamus (Sweet flag) protein is Photosystem II protein D1.